The sequence spans 95 residues: Sec-independent protein translocase protein TatA (95 aa).

Residues 1–21 (MGSMSVWHWVIVAVVVMLLFG) traverse the membrane as a helical segment. The segment at 42–95 (GMADDETQPNTATSVPPVGPNDPVRTLPHQGAPGTAPQPPHVQPHVSAGDHKAV) is disordered.

This sequence belongs to the TatA/E family. As to quaternary structure, the Tat system comprises two distinct complexes: a TatABC complex, containing multiple copies of TatA, TatB and TatC subunits, and a separate TatA complex, containing only TatA subunits. Substrates initially bind to the TatABC complex, which probably triggers association of the separate TatA complex to form the active translocon.

It localises to the cell inner membrane. Part of the twin-arginine translocation (Tat) system that transports large folded proteins containing a characteristic twin-arginine motif in their signal peptide across membranes. TatA could form the protein-conducting channel of the Tat system. The protein is Sec-independent protein translocase protein TatA of Methylorubrum extorquens (strain CM4 / NCIMB 13688) (Methylobacterium extorquens).